The following is a 418-amino-acid chain: Putative ion-transport protein YfeO (418 aa).

Helical transmembrane passes span 10 to 30, 54 to 74, 99 to 119, 120 to 140, 149 to 169, 186 to 206, 223 to 243, 258 to 278, 300 to 320, 322 to 342, 343 to 363, and 371 to 391; these read LLLSLPAVAIGIASSLILIVV, DSPLWIIGVLTLTGIAVGLVI, ALPGLIVALILGLAGGVSLGP, EHPIMTVNIALAVAIGARLLP, ILASAGTIGALFGTPVAAALI, LFAPLMAAAAGALTTGLFFHP, ILSGAIVAAIAIAAGMVAVWC, VLVLGIGGFILGILGVIGGPV, DYFLLAVIKLAALVVAAASGF, GGRIFPAVFVGVALGLMLHEH, VPAVPAAITVSCAILGIVLVV, and LFMAAVVVPNTTLLPLLCIVM.

The protein belongs to the chloride channel (TC 2.A.49) family.

It localises to the cell membrane. This Escherichia coli O9:H4 (strain HS) protein is Putative ion-transport protein YfeO.